The chain runs to 272 residues: Phosphate import ATP-binding protein PstB (272 aa).

Positions 26–267 constitute an ABC transporter domain; it reads LEIRNLDLRY…PKKRKTEDYI (242 aa). 58–65 provides a ligand contact to ATP; that stretch reads GPSGCGKS.

Belongs to the ABC transporter superfamily. Phosphate importer (TC 3.A.1.7) family. The complex is composed of two ATP-binding proteins (PstB), two transmembrane proteins (PstC and PstA) and a solute-binding protein (PstS).

The protein localises to the cell inner membrane. It carries out the reaction phosphate(out) + ATP + H2O = ADP + 2 phosphate(in) + H(+). Functionally, part of the ABC transporter complex PstSACB involved in phosphate import. Responsible for energy coupling to the transport system. The sequence is that of Phosphate import ATP-binding protein PstB from Shewanella frigidimarina (strain NCIMB 400).